Here is a 135-residue protein sequence, read N- to C-terminus: Ribosome-binding factor A (135 aa).

Belongs to the RbfA family. Monomer. Binds 30S ribosomal subunits, but not 50S ribosomal subunits or 70S ribosomes.

The protein resides in the cytoplasm. Functionally, one of several proteins that assist in the late maturation steps of the functional core of the 30S ribosomal subunit. Associates with free 30S ribosomal subunits (but not with 30S subunits that are part of 70S ribosomes or polysomes). Required for efficient processing of 16S rRNA. May interact with the 5'-terminal helix region of 16S rRNA. This Novosphingobium aromaticivorans (strain ATCC 700278 / DSM 12444 / CCUG 56034 / CIP 105152 / NBRC 16084 / F199) protein is Ribosome-binding factor A.